A 519-amino-acid chain; its full sequence is Histidine ammonia-lyase (519 aa).

A cross-link (5-imidazolinone (Ala-Gly)) is located at residues 146–148; the sequence is ASG. At serine 147 the chain carries 2,3-didehydroalanine (Ser).

The protein belongs to the PAL/histidase family. Post-translationally, contains an active site 4-methylidene-imidazol-5-one (MIO), which is formed autocatalytically by cyclization and dehydration of residues Ala-Ser-Gly.

Its subcellular location is the cytoplasm. The enzyme catalyses L-histidine = trans-urocanate + NH4(+). It functions in the pathway amino-acid degradation; L-histidine degradation into L-glutamate; N-formimidoyl-L-glutamate from L-histidine: step 1/3. The sequence is that of Histidine ammonia-lyase from Psychrobacter sp. (strain PRwf-1).